Reading from the N-terminus, the 156-residue chain is ATP synthase subunit b (156 aa).

The chain crosses the membrane as a helical span at residues 4–26 (GATFWGPMISFALFVWFTMKYVW).

The protein belongs to the ATPase B chain family. As to quaternary structure, F-type ATPases have 2 components, F(1) - the catalytic core - and F(0) - the membrane proton channel. F(1) has five subunits: alpha(3), beta(3), gamma(1), delta(1), epsilon(1). F(0) has three main subunits: a(1), b(2) and c(10-14). The alpha and beta chains form an alternating ring which encloses part of the gamma chain. F(1) is attached to F(0) by a central stalk formed by the gamma and epsilon chains, while a peripheral stalk is formed by the delta and b chains.

The protein resides in the cell inner membrane. F(1)F(0) ATP synthase produces ATP from ADP in the presence of a proton or sodium gradient. F-type ATPases consist of two structural domains, F(1) containing the extramembraneous catalytic core and F(0) containing the membrane proton channel, linked together by a central stalk and a peripheral stalk. During catalysis, ATP synthesis in the catalytic domain of F(1) is coupled via a rotary mechanism of the central stalk subunits to proton translocation. In terms of biological role, component of the F(0) channel, it forms part of the peripheral stalk, linking F(1) to F(0). The chain is ATP synthase subunit b from Alkalilimnicola ehrlichii (strain ATCC BAA-1101 / DSM 17681 / MLHE-1).